The primary structure comprises 128 residues: Small ribosomal subunit protein uS12 (128 aa).

Residue aspartate 89 is modified to 3-methylthioaspartic acid.

It belongs to the universal ribosomal protein uS12 family. As to quaternary structure, part of the 30S ribosomal subunit. Contacts proteins S8 and S17. May interact with IF1 in the 30S initiation complex.

Its function is as follows. With S4 and S5 plays an important role in translational accuracy. In terms of biological role, interacts with and stabilizes bases of the 16S rRNA that are involved in tRNA selection in the A site and with the mRNA backbone. Located at the interface of the 30S and 50S subunits, it traverses the body of the 30S subunit contacting proteins on the other side and probably holding the rRNA structure together. The combined cluster of proteins S8, S12 and S17 appears to hold together the shoulder and platform of the 30S subunit. This chain is Small ribosomal subunit protein uS12, found in Campylobacter jejuni subsp. doylei (strain ATCC BAA-1458 / RM4099 / 269.97).